Reading from the N-terminus, the 360-residue chain is Peptide chain release factor 1 (360 aa).

At Gln235 the chain carries N5-methylglutamine.

It belongs to the prokaryotic/mitochondrial release factor family. Methylated by PrmC. Methylation increases the termination efficiency of RF1.

Its subcellular location is the cytoplasm. In terms of biological role, peptide chain release factor 1 directs the termination of translation in response to the peptide chain termination codons UAG and UAA. This chain is Peptide chain release factor 1, found in Bordetella pertussis (strain Tohama I / ATCC BAA-589 / NCTC 13251).